The following is a 400-amino-acid chain: Acetate kinase (400 aa).

A Mg(2+)-binding site is contributed by N10. ATP is bound at residue K17. R91 is a binding site for substrate. D150 functions as the Proton donor/acceptor in the catalytic mechanism. Residues 210–214, 285–287, and 333–337 each bind ATP; these read HLGNG, DCR, and GIGEN. Residue E387 coordinates Mg(2+).

The protein belongs to the acetokinase family. As to quaternary structure, homodimer. Mg(2+) serves as cofactor. Requires Mn(2+) as cofactor.

It localises to the cytoplasm. It carries out the reaction acetate + ATP = acetyl phosphate + ADP. Its pathway is metabolic intermediate biosynthesis; acetyl-CoA biosynthesis; acetyl-CoA from acetate: step 1/2. In terms of biological role, catalyzes the formation of acetyl phosphate from acetate and ATP. Can also catalyze the reverse reaction. This Cronobacter sakazakii (strain ATCC BAA-894) (Enterobacter sakazakii) protein is Acetate kinase.